The chain runs to 307 residues: Holliday junction branch migration complex subunit RuvB (307 aa).

Residues 1 to 167 (MKLQIKPPNT…FGVILNINYY (167 aa)) form a large ATPase domain (RuvB-L) region. ATP contacts are provided by isoleucine 5, glycine 48, lysine 51, threonine 52, threonine 53, arginine 157, tyrosine 167, and arginine 204. Threonine 52 serves as a coordination point for Mg(2+). The small ATPAse domain (RuvB-S) stretch occupies residues 168–233 (SNAEIEKMVS…DLEGLFKNLM (66 aa)). Residues 236–307 (KNGLQSIDVQ…NSGREYLVNF (72 aa)) are head domain (RuvB-H). 3 residues coordinate DNA: arginine 270, lysine 289, and arginine 294.

It belongs to the RuvB family. As to quaternary structure, homohexamer. Forms an RuvA(8)-RuvB(12)-Holliday junction (HJ) complex. HJ DNA is sandwiched between 2 RuvA tetramers; dsDNA enters through RuvA and exits via RuvB. An RuvB hexamer assembles on each DNA strand where it exits the tetramer. Each RuvB hexamer is contacted by two RuvA subunits (via domain III) on 2 adjacent RuvB subunits; this complex drives branch migration. In the full resolvosome a probable DNA-RuvA(4)-RuvB(12)-RuvC(2) complex forms which resolves the HJ.

The protein resides in the cytoplasm. The enzyme catalyses ATP + H2O = ADP + phosphate + H(+). Its function is as follows. The RuvA-RuvB-RuvC complex processes Holliday junction (HJ) DNA during genetic recombination and DNA repair, while the RuvA-RuvB complex plays an important role in the rescue of blocked DNA replication forks via replication fork reversal (RFR). RuvA specifically binds to HJ cruciform DNA, conferring on it an open structure. The RuvB hexamer acts as an ATP-dependent pump, pulling dsDNA into and through the RuvAB complex. RuvB forms 2 homohexamers on either side of HJ DNA bound by 1 or 2 RuvA tetramers; 4 subunits per hexamer contact DNA at a time. Coordinated motions by a converter formed by DNA-disengaged RuvB subunits stimulates ATP hydrolysis and nucleotide exchange. Immobilization of the converter enables RuvB to convert the ATP-contained energy into a lever motion, pulling 2 nucleotides of DNA out of the RuvA tetramer per ATP hydrolyzed, thus driving DNA branch migration. The RuvB motors rotate together with the DNA substrate, which together with the progressing nucleotide cycle form the mechanistic basis for DNA recombination by continuous HJ branch migration. Branch migration allows RuvC to scan DNA until it finds its consensus sequence, where it cleaves and resolves cruciform DNA. The chain is Holliday junction branch migration complex subunit RuvB from Mycoplasma genitalium (strain ATCC 33530 / DSM 19775 / NCTC 10195 / G37) (Mycoplasmoides genitalium).